The chain runs to 226 residues: Putative DNA repair protein recA homolog 4 (226 aa).

41 to 48 serves as a coordination point for ATP; that stretch reads GPEASGKT.

The protein belongs to the RecA family.

The protein resides in the cytoplasm. Functionally, involved in recombination ability and DNA strand transfer activity. In Arabidopsis thaliana (Mouse-ear cress), this protein is Putative DNA repair protein recA homolog 4.